The chain runs to 416 residues: MGYGNRASSKTPAISGLREKHQQDLEKLTLTSQPFKTLRLFVVAVFLYVRRWSSYLLANVGWLILFCSIFVAFAALLVTLDGPHVKHVEELSEYTRFGLWWIFLGVASSIGLGSGLHTFVLYLGPHIALFTIKVMQCGRVDLKSAIYDTIQLKRSPSWLDKPCHEFGSPVFSSGVPLSSILPQVQIEAILWGLGTALGELPPYFISRAASLSGGKMKELETCSGDDNGFIAKRVNQIKSWLLSHSQYLNFFTILILASVPNPLFDLAGIMCGQFEKPFWEFFLATLIGKAIIKTHIQTVFIICVCNNQLLDWVENELIYILSFVPGFASALPELTAKLRLMKEKYLIASPPVSSDINVKKWDLSFASVWNGVVWLMLLNFFGQIVTSTAQRYLKKQQEEELDALTNKSSLTSKKSK.

At G2 the chain carries N-acetylglycine. The Cytoplasmic segment spans residues 2–59; the sequence is GYGNRASSKTPAISGLREKHQQDLEKLTLTSQPFKTLRLFVVAVFLYVRRWSSYLLAN. Residues 60 to 80 form a helical membrane-spanning segment; that stretch reads VGWLILFCSIFVAFAALLVTL. The Lumenal segment spans residues 81–100; that stretch reads DGPHVKHVEELSEYTRFGLW. The helical transmembrane segment at 101–123 threads the bilayer; sequence WIFLGVASSIGLGSGLHTFVLYL. Topologically, residues 124-249 are cytoplasmic; that stretch reads GPHIALFTIK…WLLSHSQYLN (126 aa). A helical membrane pass occupies residues 250-270; sequence FFTILILASVPNPLFDLAGIM. Over 271-281 the chain is Lumenal; sequence CGQFEKPFWEF. The helical transmembrane segment at 282–304 threads the bilayer; sequence FLATLIGKAIIKTHIQTVFIICV. Over 305–315 the chain is Cytoplasmic; it reads CNNQLLDWVEN. The chain crosses the membrane as a helical span at residues 316-336; the sequence is ELIYILSFVPGFASALPELTA. Residues 337-364 lie on the Lumenal side of the membrane; that stretch reads KLRLMKEKYLIASPPVSSDINVKKWDLS. The helical transmembrane segment at 365-385 threads the bilayer; sequence FASVWNGVVWLMLLNFFGQIV. Topologically, residues 386-416 are cytoplasmic; it reads TSTAQRYLKKQQEEELDALTNKSSLTSKKSK.

Belongs to the VMP1 family.

The protein resides in the endoplasmic reticulum membrane. Its function is as follows. Involved in the early secretory pathway. Required for the correct export of secretory products from the endoplasmic reticulum (ER) and involved in the maintenance of ER integrity. The sequence is that of Vacuole membrane protein KMS2 from Arabidopsis thaliana (Mouse-ear cress).